The sequence spans 89 residues: Small ribosomal subunit protein uS15 (89 aa).

Belongs to the universal ribosomal protein uS15 family. As to quaternary structure, part of the 30S ribosomal subunit. Forms a bridge to the 50S subunit in the 70S ribosome, contacting the 23S rRNA.

In terms of biological role, one of the primary rRNA binding proteins, it binds directly to 16S rRNA where it helps nucleate assembly of the platform of the 30S subunit by binding and bridging several RNA helices of the 16S rRNA. Forms an intersubunit bridge (bridge B4) with the 23S rRNA of the 50S subunit in the ribosome. The polypeptide is Small ribosomal subunit protein uS15 (Sodalis glossinidius (strain morsitans)).